The sequence spans 429 residues: Glucose-6-phosphate isomerase (429 aa).

Catalysis depends on Glu-282, which acts as the Proton donor. Residues His-303 and Lys-418 contribute to the active site.

The protein belongs to the GPI family.

It localises to the cytoplasm. It carries out the reaction alpha-D-glucose 6-phosphate = beta-D-fructose 6-phosphate. It participates in carbohydrate biosynthesis; gluconeogenesis. Its pathway is carbohydrate degradation; glycolysis; D-glyceraldehyde 3-phosphate and glycerone phosphate from D-glucose: step 2/4. In terms of biological role, catalyzes the reversible isomerization of glucose-6-phosphate to fructose-6-phosphate. The polypeptide is Glucose-6-phosphate isomerase (Mesomycoplasma hyopneumoniae (strain 7448) (Mycoplasma hyopneumoniae)).